The chain runs to 149 residues: 6,7-dimethyl-8-ribityllumazine synthase (149 aa).

5-amino-6-(D-ribitylamino)uracil-binding positions include F22, A56 to E58, and A80 to I82. E85 to T86 is a binding site for (2S)-2-hydroxy-3-oxobutyl phosphate. Residue H88 is the Proton donor of the active site. A 5-amino-6-(D-ribitylamino)uracil-binding site is contributed by N113. R127 is a binding site for (2S)-2-hydroxy-3-oxobutyl phosphate.

It belongs to the DMRL synthase family.

It catalyses the reaction (2S)-2-hydroxy-3-oxobutyl phosphate + 5-amino-6-(D-ribitylamino)uracil = 6,7-dimethyl-8-(1-D-ribityl)lumazine + phosphate + 2 H2O + H(+). Its pathway is cofactor biosynthesis; riboflavin biosynthesis; riboflavin from 2-hydroxy-3-oxobutyl phosphate and 5-amino-6-(D-ribitylamino)uracil: step 1/2. Functionally, catalyzes the formation of 6,7-dimethyl-8-ribityllumazine by condensation of 5-amino-6-(D-ribitylamino)uracil with 3,4-dihydroxy-2-butanone 4-phosphate. This is the penultimate step in the biosynthesis of riboflavin. The sequence is that of 6,7-dimethyl-8-ribityllumazine synthase from Methylobacillus flagellatus (strain ATCC 51484 / DSM 6875 / VKM B-1610 / KT).